Reading from the N-terminus, the 606-residue chain is Endonuclease 8-like 3 (606 aa).

The Schiff-base intermediate with DNA; via amino nitrogen role is filled by Val2. The segment at 31–51 is disordered; it reads ALQGLGGPGSPPAAPGPMGTS. DNA contacts are provided by Asn194 and Arg273. An FPG-type zinc finger spans residues 249–283; the sequence is KVYKRPNCGQCCCKITVCRLGENNRMTYFCPHCQK. The RanBP2-type zinc finger occupies 319–348; it reads SEEQWTCEVCTLINKLSSKTCDACLTSRPA. A Phosphoserine modification is found at Ser451. Zn(2+) is bound by residues Cys508, His511, Cys534, Cys542, Cys555, His557, Cys580, and Cys588. GRF-type zinc fingers lie at residues 508 to 551 and 555 to 597; these read CSKH…ADLS and CNHG…AQNG.

It belongs to the FPG family.

Its subcellular location is the nucleus. The protein localises to the chromosome. The enzyme catalyses 2'-deoxyribonucleotide-(2'-deoxyribose 5'-phosphate)-2'-deoxyribonucleotide-DNA = a 3'-end 2'-deoxyribonucleotide-(2,3-dehydro-2,3-deoxyribose 5'-phosphate)-DNA + a 5'-end 5'-phospho-2'-deoxyribonucleoside-DNA + H(+). DNA glycosylase which prefers single-stranded DNA (ssDNA), or partially ssDNA structures such as bubble and fork structures, to double-stranded DNA (dsDNA). Mediates interstrand cross-link repair in response to replication stress: acts by mediating DNA glycosylase activity, cleaving one of the two N-glycosyl bonds comprising the interstrand cross-link, which avoids the formation of a double-strand break but generates an abasic site that is bypassed by translesion synthesis polymerases. In vitro, displays strong glycosylase activity towards the hydantoin lesions spiroiminodihydantoin (Sp) and guanidinohydantoin (Gh) in both ssDNA and dsDNA; also recognizes FapyA, FapyG, 5-OHU, 5-OHC, 5-OHMH, Tg and 8-oxoA lesions in ssDNA. No activity on 8-oxoG detected. Also shows weak DNA-(apurinic or apyrimidinic site) lyase activity. In vivo, appears to be the primary enzyme involved in removing Sp and Gh from ssDNA in neonatal tissues. This Bos taurus (Bovine) protein is Endonuclease 8-like 3 (NEIL3).